The chain runs to 117 residues: Putative membrane protein insertion efficiency factor (117 aa).

This sequence belongs to the UPF0161 family.

It localises to the cell inner membrane. Its function is as follows. Could be involved in insertion of integral membrane proteins into the membrane. The protein is Putative membrane protein insertion efficiency factor of Bartonella henselae (strain ATCC 49882 / DSM 28221 / CCUG 30454 / Houston 1) (Rochalimaea henselae).